The chain runs to 296 residues: Glycerol-3-phosphate dehydrogenase [NAD(P)+] (296 aa).

Residues tryptophan 12, arginine 31, and lysine 80 each contribute to the NADPH site. The sn-glycerol 3-phosphate site is built by lysine 80, glycine 108, and serine 110. Alanine 112 serves as a coordination point for NADPH. Sn-glycerol 3-phosphate contacts are provided by lysine 162, aspartate 215, serine 225, arginine 226, and asparagine 227. Lysine 162 (proton acceptor) is an active-site residue. Arginine 226 is a binding site for NADPH. Valine 250 and glutamate 252 together coordinate NADPH.

Belongs to the NAD-dependent glycerol-3-phosphate dehydrogenase family.

It is found in the cytoplasm. It carries out the reaction sn-glycerol 3-phosphate + NAD(+) = dihydroxyacetone phosphate + NADH + H(+). The catalysed reaction is sn-glycerol 3-phosphate + NADP(+) = dihydroxyacetone phosphate + NADPH + H(+). It participates in membrane lipid metabolism; glycerophospholipid metabolism. In terms of biological role, catalyzes the reduction of the glycolytic intermediate dihydroxyacetone phosphate (DHAP) to sn-glycerol 3-phosphate (G3P), the key precursor for phospholipid synthesis. The polypeptide is Glycerol-3-phosphate dehydrogenase [NAD(P)+] (Sulfurimonas denitrificans (strain ATCC 33889 / DSM 1251) (Thiomicrospira denitrificans (strain ATCC 33889 / DSM 1251))).